The sequence spans 196 residues: Flagellin B2 (196 aa).

Positions 1–12 are excised as a propeptide; the sequence is MFEFITDEDERG.

It belongs to the archaeal flagellin family. In terms of processing, glycosylated.

Its subcellular location is the archaeal flagellum. Flagellin is the subunit protein which polymerizes to form the filaments of archaeal flagella. The polypeptide is Flagellin B2 (flaB2) (Halobacterium salinarum (strain ATCC 700922 / JCM 11081 / NRC-1) (Halobacterium halobium)).